A 336-amino-acid polypeptide reads, in one-letter code: Ornithine carbamoyltransferase, catabolic (336 aa).

Carbamoyl phosphate contacts are provided by residues 57–60, Q84, R108, and 135–138; these read STRT and HPTQ. Residues N168, D232, and 236–237 contribute to the L-ornithine site; that span reads SM. Carbamoyl phosphate-binding positions include 274 to 275 and R321; that span reads CL.

Belongs to the aspartate/ornithine carbamoyltransferase superfamily. OTCase family.

It is found in the cytoplasm. It carries out the reaction carbamoyl phosphate + L-ornithine = L-citrulline + phosphate + H(+). It functions in the pathway amino-acid degradation; L-arginine degradation via ADI pathway; carbamoyl phosphate from L-arginine: step 2/2. In terms of biological role, reversibly catalyzes the transfer of the carbamoyl group from carbamoyl phosphate (CP) to the N(epsilon) atom of ornithine (ORN) to produce L-citrulline. This is Ornithine carbamoyltransferase, catabolic (arcB) from Ectopseudomonas mendocina (Pseudomonas mendocina).